We begin with the raw amino-acid sequence, 234 residues long: Small ribosomal subunit protein uS3 (234 aa).

The KH type-2 domain maps to 39 to 107 (VRKFLNKELA…PAQINIAEVK (69 aa)).

The protein belongs to the universal ribosomal protein uS3 family. As to quaternary structure, part of the 30S ribosomal subunit. Forms a tight complex with proteins S10 and S14.

Functionally, binds the lower part of the 30S subunit head. Binds mRNA in the 70S ribosome, positioning it for translation. The sequence is that of Small ribosomal subunit protein uS3 from Haemophilus ducreyi (strain 35000HP / ATCC 700724).